The sequence spans 387 residues: Protochlorophyllide reductase A, chloroplastic (387 aa).

Residues 1–35 (MALQVQAALLPSALSVPKKGNLSAVVKEPGFLSVS) constitute a chloroplast transit peptide.

The protein belongs to the short-chain dehydrogenases/reductases (SDR) family. POR subfamily.

The protein resides in the plastid. The protein localises to the chloroplast. It carries out the reaction chlorophyllide a + NADP(+) = protochlorophyllide a + NADPH + H(+). Its pathway is porphyrin-containing compound metabolism; chlorophyll biosynthesis. Functionally, phototransformation of protochlorophyllide (Pchlide) to chlorophyllide (Chlide). This is Protochlorophyllide reductase A, chloroplastic (PORA) from Oryza sativa subsp. japonica (Rice).